A 92-amino-acid polypeptide reads, in one-letter code: MTRSLKKNPFVAKHLLRKIEKLNTKAEKEIIITWSRASTIIPTMIGHTIAIHNGREHLPVYIIDLMVGHKLGEFSPTINFRGHAKNDTRSRR.

This sequence belongs to the universal ribosomal protein uS19 family.

Its subcellular location is the plastid. The protein localises to the chloroplast. In terms of biological role, protein S19 forms a complex with S13 that binds strongly to the 16S ribosomal RNA. This is Small ribosomal subunit protein uS19c from Draba nemorosa (Woodland whitlowgrass).